Consider the following 151-residue polypeptide: Small ribosomal subunit protein uS15 (151 aa).

The protein belongs to the universal ribosomal protein uS15 family.

This chain is Small ribosomal subunit protein uS15 (RPS13), found in Zea mays (Maize).